Reading from the N-terminus, the 425-residue chain is UPF0597 protein KPN78578_43500 (425 aa).

Belongs to the UPF0597 family.

This is UPF0597 protein KPN78578_43500 from Klebsiella pneumoniae subsp. pneumoniae (strain ATCC 700721 / MGH 78578).